The following is a 278-amino-acid chain: MITEFIDGLQQFHFLQNALITAIAIGIVAGAVGCFIILRGMSLMGDAISHAVLPGVALSFILGINFFIGAIAFGLLASILITYIKSNSIIKSDTAMGYLSLPRPRSHSDRVAKSSTDLFHILFGNILAVQDQDMWVTIGVGVAVLLVIVLLFRPLLLTSFDPVLAQSMGVRVKLYHYLLMVLLTLVSVTAMQSVGTILIAAMLITPAATAYLYANSLWSMMLLSSGLGALASILGLFIGYSFNIAVGSCIVLTSAIFFLISFFIAPKQRKNKHALSPH.

A run of 8 helical transmembrane segments spans residues 18–38 (ALIT…FIIL), 40–60 (GMSL…ALSF), 61–81 (ILGI…SILI), 136–156 (VTIG…RPLL), 172–192 (VKLY…TAMQ), 194–214 (VGTI…YLYA), 220–240 (MMLL…FIGY), and 244–264 (IAVG…SFFI).

Belongs to the ABC-3 integral membrane protein family.

Its subcellular location is the cell membrane. Functionally, part of an ABC transporter complex involved in manganese import. This Streptococcus pneumoniae protein is Manganese import system permease protein ScaB.